Reading from the N-terminus, the 45-residue chain is MKFFSVVTVFVLGLLAVANAVPLSPDPGNVIINGDCRVCNVHGGK.

A signal peptide spans 1-20 (MKFFSVVTVFVLGLLAVANA). Residues 21-27 (VPLSPDP) constitute a propeptide, removed by a dipeptidylpeptidase. A disulfide bond links Cys-36 and Cys-39. Glycine amide is present on Gly-43.

In terms of tissue distribution, hemolymph (at protein level).

Its subcellular location is the secreted. Its function is as follows. Secreted immune-induced peptide induced by Toll signaling. Has a role in resistance to bacterial and fungal infections. Has no activity against the fungus C.glabrata in vitro. This chain is Bomanin Short 1, found in Drosophila melanogaster (Fruit fly).